The primary structure comprises 446 residues: MEASFVQTTMALGLPSKKASSRNVIVERRNLITVCRFSVKTLLEKYTAEPIDDSSEEFVNFAAILEQILSHRFKACAPAGPASWFSSDGQRGFWDYIRLACSKVPNNCVSSIENMENISTARAKGRAWIRVALMEKRMSEYITTALRDNRTTRRFYDSGAIMLREEATVLTGMLIGLSAIDFSFCLKGEVLDGKTPVVIDYTPYLKFTQSYDYLTDEEERHSAESSTSEDNSPEHPYLPLVTDEDSWYNKWHKMEQKFRIVYAQKGYLEELVRLRESQLKDLEAENRRLQLQLEEAAAQNQREKRELEGVILELQEQLTGLIPGDHAPLAQGSKELTTSLVNQWPSLSTLHRPEGASNSKLYRRHSFMSTEPLSAEASLSSDSQRLGEAKRDEEPWGPIGKDPTPSMLGLCGSLASIPSCKSLASFKSNECLVSDSPEGSPALSPS.

Residues 1 to 298 form an interaction with RAP2A region; it reads MEASFVQTTM…LQLQLEEAAA (298 aa). Residues 52–189 enclose the RUN domain; sequence DDSSEEFVNF…IDFSFCLKGE (138 aa). T215 is modified (phosphothreonine). Residues 216 to 239 form a disordered region; sequence DEEERHSAESSTSEDNSPEHPYLP. S232 bears the Phosphoserine mark. A coiled-coil region spans residues 267-322; the sequence is YLEELVRLRESQLKDLEAENRRLQLQLEEAAAQNQREKRELEGVILELQEQLTGLI. Over residues 372–384 the composition is skewed to polar residues; sequence PLSAEASLSSDSQ. A disordered region spans residues 372–403; it reads PLSAEASLSSDSQRLGEAKRDEEPWGPIGKDP. Residues 385-394 show a composition bias toward basic and acidic residues; it reads RLGEAKRDEE. S416 and S419 each carry phosphoserine.

It belongs to the RUNDC3 family. As to quaternary structure, interacts with the GTP-bound form of RAP2A. As to expression, brain.

Functionally, may act as an effector of RAP2A in neuronal cells. This is RUN domain-containing protein 3A (Rundc3a) from Mus musculus (Mouse).